The chain runs to 337 residues: Anaerobic sulfite reductase subunit C (337 aa).

[4Fe-4S] cluster-binding residues include C115, C121, C153, C157, C180, C183, C186, C190, C212, C215, C218, and C222. Residue C157 coordinates siroheme. 2 4Fe-4S ferredoxin-type domains span residues 171-200 (AKMR…CLAL) and 203-232 (GKAV…RKPD).

The protein belongs to the nitrite and sulfite reductase 4Fe-4S domain family. The anaerobic sulfite reductase seems to consist of three subunits. [4Fe-4S] cluster is required as a cofactor. The cofactor is siroheme.

Its subcellular location is the cytoplasm. The enzyme catalyses hydrogen sulfide + 3 NAD(+) + 3 H2O = sulfite + 3 NADH + 4 H(+). It functions in the pathway sulfur metabolism; sulfite reduction. In terms of biological role, this enzyme catalyzes the hydrogen sulfide production from sulfite. It is strictly anaerobic. It is regulated by electron acceptors rather than by cysteine. The sequence is that of Anaerobic sulfite reductase subunit C (asrC) from Salmonella typhi.